The sequence spans 447 residues: Serine/threonine-protein phosphatase 2A 55 kDa regulatory subunit B delta isoform (447 aa).

WD repeat units lie at residues 26-65 (AEAD…KSRP), 91-132 (EIEE…KRVE), 175-213 (AHTY…RSFN), 224-264 (ELTE…LCDR), 283-321 (EIIS…RPVE), 338-379 (ENDC…DITL), and 414-447 (DFNK…DKVN).

The protein belongs to the phosphatase 2A regulatory subunit B family. As to quaternary structure, PP2A consists of a common heterodimeric core enzyme, composed of a 36 kDa catalytic subunit (subunit C) and a 65 kDa constant regulatory subunit (PR65 or subunit A), that associates with a variety of regulatory subunits. Proteins that associate with the core dimer include three families of regulatory subunits B (the R2/B/PR55/B55, R3/B''/PR72/PR130/PR59 and R5/B'/B56 families), the 48 kDa variable regulatory subunit, viral proteins, and cell signaling molecules. Interacts with ensa (when phosphorylated at 'Ser-67') and arpp19 (when phosphorylated at 'Ser-67'), leading to inhibit PP2A activity.

The protein resides in the cytoplasm. Its function is as follows. Substrate-recognition subunit of protein phosphatase 2A (PP2A) that plays a key role in cell cycle by controlling mitosis entry and exit. The activity of PP2A complexes containing ppp2r2d (PR55-delta) fluctuate during the cell cycle: the activity is high in interphase and low in mitosis. During mitosis, activity of PP2A is inhibited via interaction with phosphorylated ensa and arpp19 inhibitors. PP2A complexes containing ppp2r2d (PR55-delta) also regulate the activity of TGF-beta/Activin/Nodal signaling by restricting receptor activity. Within the PP2A complexes, the B regulatory subunits modulate substrate selectivity and catalytic activity, and may also direct the localization of the catalytic enzyme to a particular subcellular compartment. In Xenopus laevis (African clawed frog), this protein is Serine/threonine-protein phosphatase 2A 55 kDa regulatory subunit B delta isoform (ppp2r2d).